Reading from the N-terminus, the 116-residue chain is Probable prefoldin subunit 2 (116 aa).

The protein belongs to the prefoldin subunit beta family. In terms of assembly, heterohexamer of two PFD-alpha type and four PFD-beta type subunits.

Functionally, binds specifically to cytosolic chaperonin (c-CPN) and transfers target proteins to it. Binds to nascent polypeptide chain and promotes folding in an environment in which there are many competing pathways for nonnative proteins. The sequence is that of Probable prefoldin subunit 2 (pfdn2) from Dictyostelium discoideum (Social amoeba).